The primary structure comprises 455 residues: Bifunctional protein GlmU (455 aa).

Residues 1 to 226 (MSLEIVILAA…PMEVQGANDR (226 aa)) are pyrophosphorylase. Residues 8-11 (LAAG), K22, Q73, 78-79 (GT), 99-101 (YGD), G136, E151, N166, and N224 each bind UDP-N-acetyl-alpha-D-glucosamine. Mg(2+) is bound at residue D101. N224 contacts Mg(2+). A linker region spans residues 227–247 (KQLSELERHYQLRAGRRLMAQ). The segment at 248-455 (GVTLRDPARF…WKRPEKIKKN (208 aa)) is N-acetyltransferase. Positions 330 and 348 each coordinate UDP-N-acetyl-alpha-D-glucosamine. H360 serves as the catalytic Proton acceptor. Y363 and N374 together coordinate UDP-N-acetyl-alpha-D-glucosamine. Acetyl-CoA contacts are provided by residues A377, 383–384 (NY), S402, A420, and R437.

This sequence in the N-terminal section; belongs to the N-acetylglucosamine-1-phosphate uridyltransferase family. In the C-terminal section; belongs to the transferase hexapeptide repeat family. Homotrimer. It depends on Mg(2+) as a cofactor.

Its subcellular location is the cytoplasm. It carries out the reaction alpha-D-glucosamine 1-phosphate + acetyl-CoA = N-acetyl-alpha-D-glucosamine 1-phosphate + CoA + H(+). The enzyme catalyses N-acetyl-alpha-D-glucosamine 1-phosphate + UTP + H(+) = UDP-N-acetyl-alpha-D-glucosamine + diphosphate. It participates in nucleotide-sugar biosynthesis; UDP-N-acetyl-alpha-D-glucosamine biosynthesis; N-acetyl-alpha-D-glucosamine 1-phosphate from alpha-D-glucosamine 6-phosphate (route II): step 2/2. The protein operates within nucleotide-sugar biosynthesis; UDP-N-acetyl-alpha-D-glucosamine biosynthesis; UDP-N-acetyl-alpha-D-glucosamine from N-acetyl-alpha-D-glucosamine 1-phosphate: step 1/1. Its pathway is bacterial outer membrane biogenesis; LPS lipid A biosynthesis. In terms of biological role, catalyzes the last two sequential reactions in the de novo biosynthetic pathway for UDP-N-acetylglucosamine (UDP-GlcNAc). The C-terminal domain catalyzes the transfer of acetyl group from acetyl coenzyme A to glucosamine-1-phosphate (GlcN-1-P) to produce N-acetylglucosamine-1-phosphate (GlcNAc-1-P), which is converted into UDP-GlcNAc by the transfer of uridine 5-monophosphate (from uridine 5-triphosphate), a reaction catalyzed by the N-terminal domain. The sequence is that of Bifunctional protein GlmU from Pseudomonas fluorescens (strain Pf0-1).